We begin with the raw amino-acid sequence, 305 residues long: MGDFIGHISPGLFLVFYGLYQAIIVSRALILNDSLLYPSYLSKNKGKWARLWQIAHAGWLKVVSGSLLIVYELNCVDEGLTFMTKMIPPRFMYPKEWQHLTMFILLTLDGCVEVVSRSVLRQRLVLLERGATVLGVYVLLLLLVSHVKDSSGVELQVHSLLILVVFLLMLVLTAELWAPEMVHLWVIETFLFLTMGSWLMQAAFILFRPVSGFPWEDDDISNIMLVTTFFCWHVMINALCMLGIYGISSFWHRCYRTGLMPMGSKEVLYHKSSEGTFYKLLQKAEQQDRDDQAPLLSKSSPCDRA.

A helical transmembrane segment spans residues Phe4–Ile24. Asn32 carries N-linked (GlcNAc...) asparagine glycosylation. 6 helical membrane-spanning segments follow: residues Leu51 to Tyr71, Leu100 to Leu120, Leu124 to Val144, Ser159 to Pro179, Ile187 to Phe207, and Ile223 to Gly243. The tract at residues Glu285 to Ala305 is disordered.

It belongs to the TMEM45 family.

Its subcellular location is the membrane. This is Transmembrane epididymal protein 1 (Teddm1) from Rattus norvegicus (Rat).